We begin with the raw amino-acid sequence, 327 residues long: MKGKFLKVSSLFVATLTTATLVSSPAANALSSKAMDNHPQQSQSSKQQTPKIQKGGNLKPLEQREHANVILPNNDRHQITDTTNGHYAPVTYIQVEAPTGTFIASGVVVGKDTLLTNKHVVDATHGDPHALKAFPSAINQDNYPNGGFTAEQITKYSGEGDLAIVKFSPNEQNKHIGEVVKPATMSNNAETQVNQNITVTGYPGDKPVATMWESKGKITYLKGEAMQYDLSTTGGNSGSPVFNEKNEVIGIHWGGVPNEFNGAVFINENVRNFLKQNIEDIHFANDDQPNNPDNPDNPNNPDNPNNPNNPDNPDNGDNNNSDNPDAA.

The signal sequence occupies residues 1 to 29 (MKGKFLKVSSLFVATLTTATLVSSPAANA). Residues 30-68 (LSSKAMDNHPQQSQSSKQQTPKIQKGGNLKPLEQREHAN) constitute a propeptide that is removed on maturation. Residues 33-61 (KAMDNHPQQSQSSKQQTPKIQKGGNLKPL) form a disordered region. Residues 40-54 (QQSQSSKQQTPKIQK) are compositionally biased toward low complexity. Residues His-119, Asp-161, and Ser-237 each act as charge relay system in the active site. Positions 283–327 (FANDDQPNNPDNPDNPNNPDNPNNPNNPDNPDNGDNNNSDNPDAA) are disordered. Residues 286–327 (DDQPNNPDNPDNPNNPDNPNNPNNPDNPDNGDNNNSDNPDAA) are compositionally biased toward low complexity. 9 tandem repeats follow at residues 289-291 (PNN), 292-294 (PDN), 295-297 (PDN), 298-300 (PNN), 301-303 (PDN), 304-306 (PNN), 307-309 (PNN), 310-312 (PDN), and 313-315 (PDN). The 9 X 3 AA repeats of P-[DN]-N stretch occupies residues 289 to 315 (PNNPDNPDNPNNPDNPNNPNNPDNPDN).

Belongs to the peptidase S1B family. Post-translationally, proteolytically cleaved by aureolysin (aur). This cleavage leads to the activation of SspA.

Its subcellular location is the secreted. It carries out the reaction Preferential cleavage: Glu-|-Xaa, Asp-|-Xaa.. Its function is as follows. Preferentially cleaves peptide bonds on the carboxyl-terminal side of aspartate and glutamate. Along with other extracellular proteases it is involved in colonization and infection of human tissues. Required for proteolytic maturation of thiol protease SspB and inactivation of SspC, an inhibitor of SspB. It is the most important protease for degradation of fibronectin-binding protein (FnBP) and surface protein A, which are involved in adherence to host cells. May also protect bacteria against host defense mechanism by cleaving the immunoglobulin classes IgG, IgA and IgM. May be involved in the stability of secreted lipases. The sequence is that of Glutamyl endopeptidase (sspA) from Staphylococcus aureus (strain MW2).